The chain runs to 296 residues: Enoyl-CoA hydratase AKT3-2 (296 aa).

Positions 294 to 296 match the Peroxisomal targeting signal type 1 motif; it reads PKL.

It belongs to the enoyl-CoA hydratase/isomerase family.

Its subcellular location is the peroxisome. It catalyses the reaction a (3S)-3-hydroxyacyl-CoA = a (2E)-enoyl-CoA + H2O. The catalysed reaction is a 4-saturated-(3S)-3-hydroxyacyl-CoA = a (3E)-enoyl-CoA + H2O. It participates in mycotoxin biosynthesis. In terms of biological role, enoyl-CoA hydratase; part of the gene clusters that mediate the biosynthesis of the host-selective toxins (HSTs) AK-toxins responsible for Japanese pear black spot disease by the Japanese pear pathotype. AK-toxins are esters of 9,10-epoxy 8-hydroxy 9-methyldecatrienoic acid (EDA). On cellular level, AK-toxins affect plasma membrane of susceptible cells and cause a sudden increase in loss of K(+) after a few minutes of toxin treatment. The acyl-CoA ligase AKT1, the hydrolase AKT2 and enoyl-CoA hydratase AKT3 are all involved in the biosynthesis of the AK-, AF- and ACT-toxin common 9,10-epoxy-8-hydroxy-9-methyl-decatrienoic acid (EDA) structural moiety. Part of the EDA biosynthesis occurs in the peroxisome since these 3 enzymes are localized in peroxisomes. The exact roles of the 3 enzymes, as well as of additional AK-toxin clusters enzymes, including AKT4, AKT6 and AKTS1, have still to be elucidated. The Cytochrome P450 monooxygenase AKT7 on the other side functions to limit production of EDA and AK-toxin, probably via the catalysis of a side reaction of EDA or its precursor. The chain is Enoyl-CoA hydratase AKT3-2 from Alternaria alternata (Alternaria rot fungus).